The sequence spans 621 residues: Putative zinc metalloprotease CPn_0344/CP_0416/CPj0344/CpB0350 (621 aa).

H20 lines the Zn(2+) pocket. E21 is an active-site residue. H24 contacts Zn(2+). The next 3 membrane-spanning stretches (helical) occupy residues 103–125 (ILVL…SILY), 561–583 (VLNL…WEIV), and 596–613 (ILVP…FLTF).

This sequence belongs to the peptidase M50B family. Zn(2+) is required as a cofactor.

The protein resides in the cell inner membrane. In Chlamydia pneumoniae (Chlamydophila pneumoniae), this protein is Putative zinc metalloprotease CPn_0344/CP_0416/CPj0344/CpB0350.